Reading from the N-terminus, the 401-residue chain is MTQYASPILTSLLDTDAYKLHMQQAVFHRYPAISVAAEFRCRGDELLGEYADEIGAQIALMSQLALTDAEFDYLSGLPFFREDYLNWLRDFRYDPQQVQIENHAGKLHIRIAGPWREVIMWEVPLLAVISEVVHRHRSPDVTPEMAVAHLRNKLAQFKAMSSDVDISRFKLMDFGTRRRFSQAVQQAIVGTLKNEFPYLVGTSNYDLAHQLDLAPVGTQAHEWFQAHQQISPVLANSQRAALQAWLDEYPDQLGIALTDCITMDAFLRDFGPQFAQRYQGLRHDSGDPFEWGEKAIAHFQKLGIDPMSKTLVFSDNLDLDKALALYRHFYQRVNLVFGIGTRLTCDIPGVKPLNIVIKLVECKGKPVAKLSDSPGKTICQDQAFVKALRKAFDLPLVKKAS.

H221 bears the Phosphohistidine; by autocatalysis mark.

This sequence belongs to the NAPRTase family. Transiently phosphorylated on a His residue during the reaction cycle. Phosphorylation strongly increases the affinity for substrates and increases the rate of nicotinate D-ribonucleotide production. Dephosphorylation regenerates the low-affinity form of the enzyme, leading to product release.

The catalysed reaction is nicotinate + 5-phospho-alpha-D-ribose 1-diphosphate + ATP + H2O = nicotinate beta-D-ribonucleotide + ADP + phosphate + diphosphate. The protein operates within cofactor biosynthesis; NAD(+) biosynthesis; nicotinate D-ribonucleotide from nicotinate: step 1/1. Catalyzes the synthesis of beta-nicotinate D-ribonucleotide from nicotinate and 5-phospho-D-ribose 1-phosphate at the expense of ATP. This is Nicotinate phosphoribosyltransferase from Serratia proteamaculans (strain 568).